A 712-amino-acid polypeptide reads, in one-letter code: Lactoperoxidase (712 aa).

Positions 1 to 22 (MWVCLQLPVFLASVTLFEVAAS) are cleaved as a signal peptide. A propeptide spanning residues 23–100 (DTIAQAASTT…WEESLKRLRR (78 aa)) is cleaved from the precursor. Asparagine 106 is a glycosylation site (N-linked (GlcNAc...) asparagine). Intrachain disulfides connect cysteine 123/cysteine 284, cysteine 132/cysteine 145, cysteine 246/cysteine 256, and cysteine 250/cysteine 274. Asparagine 212 carries N-linked (GlcNAc...) asparagine glycosylation. Aspartate 225 contacts heme b. Histidine 226 (proton acceptor) is an active-site residue. Residue aspartate 227 participates in Ca(2+) binding. Ca(2+) contacts are provided by threonine 301, phenylalanine 303, aspartate 305, and serine 307. The residue at position 315 (serine 315) is a Phosphoserine. Residues asparagine 322 and asparagine 358 are each glycosylated (N-linked (GlcNAc...) asparagine). Cysteine 354 and cysteine 365 are disulfide-bonded. Glutamate 375 serves as a coordination point for heme b. Asparagine 449 carries N-linked (GlcNAc...) asparagine glycosylation. Histidine 468 lines the heme b pocket. Tyrosine 482 bears the 3'-nitrotyrosine mark. 2 disulfides stabilise this stretch: cysteine 573–cysteine 630 and cysteine 671–cysteine 696.

This sequence belongs to the peroxidase family. XPO subfamily. It depends on Ca(2+) as a cofactor. Heme b serves as cofactor. Mammary gland; milk.

The protein resides in the secreted. It localises to the cytoplasm. The catalysed reaction is 2 a phenolic donor + H2O2 = 2 a phenolic radical donor + 2 H2O. The enzyme catalyses thiocyanate + H2O2 + H(+) = hypothiocyanous acid + H2O. It catalyses the reaction iodide + H2O2 = hypoiodite + H2O. In terms of biological role, heme-containing oxidoreductase which catalyzes the conversion of thiocyanate (SCN(-)) into antimicrobial agent hypothiocyanous acid (OSCN(-)) in the presence of hydrogen peroxide (H2O2). Also involved in the conversion of iodide (I(-)) into hypoiodite (IO(-)) in the presence of H2O2. Responsible for the inactivation of a wide range of micro-organisms and hence, important component of defense mechanism. The lactoperoxidase-SCN(-)-H2O2 system shows antibacterial properties against some streptococci strains. The lactoperoxidase-I(-)-H2O2 system shows antibacterial properties against E.coli. May protect the udder from infection and may promote growth in newborns. May be implicated in airway host defense against infection. May contribute to maintaining an appropriate H2O2 cellular level, therefore protecting cells from H2O2-caused injuries and inflammation. This is Lactoperoxidase (LPO) from Bos taurus (Bovine).